A 391-amino-acid chain; its full sequence is S-adenosylmethionine synthase (391 aa).

H16 lines the ATP pocket. D18 contributes to the Mg(2+) binding site. E44 lines the K(+) pocket. L-methionine contacts are provided by E57 and Q101. The tract at residues 101-111 (QSADIAQGVDA) is flexible loop. Residues 166 to 168 (DAK), D244, 250 to 251 (RK), A267, and K271 contribute to the ATP site. Residue D244 participates in L-methionine binding. Position 275 (K275) interacts with L-methionine.

This sequence belongs to the AdoMet synthase family. In terms of assembly, homotetramer; dimer of dimers. Mg(2+) serves as cofactor. K(+) is required as a cofactor.

It localises to the cytoplasm. It catalyses the reaction L-methionine + ATP + H2O = S-adenosyl-L-methionine + phosphate + diphosphate. Its pathway is amino-acid biosynthesis; S-adenosyl-L-methionine biosynthesis; S-adenosyl-L-methionine from L-methionine: step 1/1. Functionally, catalyzes the formation of S-adenosylmethionine (AdoMet) from methionine and ATP. The overall synthetic reaction is composed of two sequential steps, AdoMet formation and the subsequent tripolyphosphate hydrolysis which occurs prior to release of AdoMet from the enzyme. The sequence is that of S-adenosylmethionine synthase from Zymomonas mobilis subsp. mobilis (strain ATCC 31821 / ZM4 / CP4).